A 265-amino-acid chain; its full sequence is Protein HesA, vegetative (265 aa).

The protein belongs to the HesA/MoeB/ThiF family.

This chain is Protein HesA, vegetative (hesA2), found in Trichormus variabilis (strain ATCC 29413 / PCC 7937) (Anabaena variabilis).